The chain runs to 572 residues: Probable D-xylulose kinase A (572 aa).

His-95, Arg-166, Asp-282, and Asn-283 together coordinate substrate. ATP is bound by residues Trp-365, 470 to 471 (GG), and Asn-474.

Belongs to the FGGY kinase family.

Its subcellular location is the cytoplasm. It catalyses the reaction D-xylulose + ATP = D-xylulose 5-phosphate + ADP + H(+). Highly specific D-xylulose kinase which participates in the catabolism of xylose. Xylose is a major component of hemicelluloses such as xylan. Most fungi utilize D-xylose via three enzymatic reactions, xylose reductase (XR), xylitol dehydrogenase (XDH), and xylulokinase, to form xylulose 5-phosphate, which enters pentose phosphate pathway. In Aspergillus oryzae (strain ATCC 42149 / RIB 40) (Yellow koji mold), this protein is Probable D-xylulose kinase A (xkiA).